We begin with the raw amino-acid sequence, 422 residues long: Serine hydroxymethyltransferase (422 aa).

120–122 (GHI) is a binding site for (6S)-5,6,7,8-tetrahydrofolate. Lysine 226 carries the N6-(pyridoxal phosphate)lysine modification. Glutamate 241 lines the (6S)-5,6,7,8-tetrahydrofolate pocket.

Belongs to the SHMT family. Homodimer. The cofactor is pyridoxal 5'-phosphate.

The protein localises to the cytoplasm. It catalyses the reaction 5,10-methylenetetrahydromethanopterin + glycine + H2O = 5,6,7,8-tetrahydromethanopterin + L-serine. It functions in the pathway amino-acid biosynthesis; glycine biosynthesis; glycine from L-serine: step 1/1. Functionally, catalyzes the reversible interconversion of serine and glycine with tetrahydromethanopterin (H4MPT) serving as the one-carbon carrier. Also exhibits a pteridine-independent aldolase activity toward beta-hydroxyamino acids, producing glycine and aldehydes, via a retro-aldol mechanism. This is Serine hydroxymethyltransferase from Methanosphaera stadtmanae (strain ATCC 43021 / DSM 3091 / JCM 11832 / MCB-3).